The primary structure comprises 1888 residues: E3 ubiquitin-protein ligase UPL3 (1888 aa).

Residues 1–10 show a composition bias toward basic and acidic residues; sequence METRSRKRAE. The interval 1-157 is disordered; the sequence is METRSRKRAE…NGGFMHPNMS (157 aa). The segment covering 41-81 has biased composition (low complexity); it reads LSSSSSSSLAPTPPSSSTTTRSRSSRSAAAAAPMDTSTDSS. The span at 97–124 shows a compositional bias: basic and acidic residues; it reads NSDKGKEKEHDVRIRERERERDRAREQL. The segment covering 137-146 has biased composition (acidic residues); the sequence is DEDDDNDSED. 4 ARM repeats span residues 227–267, 270–310, 312–349, and 351–390; these read EDSL…HLCD, PSSC…KISQ, HPTA…NMCK, and LPSD…RIAE. 4 disordered regions span residues 660–711, 970–1119, 1134–1157, and 1280–1307; these read KPSH…IGAN, ALKP…LPMC, DDDG…GAAA, and RLSV…VESQ. Over residues 986–1002 the composition is skewed to low complexity; that stretch reads PSGAGVSSPSSSTPAST. Positions 1019–1029 are enriched in basic and acidic residues; that stretch reads TSKKDPVHEKG. The segment covering 1076-1113 has biased composition (acidic residues); that stretch reads SSEDEELEISPVDIDDALVIEEDDISDDEDDDNEDVLD. Composition is skewed to low complexity over residues 1148-1157 and 1286-1303; these read ASGGTSGAAA and ASST…TNSS. The K-box stretch occupies residues 1377-1451; the sequence is AKVPLDEFVN…ALNRLQQQQG (75 aa). An HECT domain is found at 1490 to 1888; that stretch reads MYSSQKAVLE…NEGQGSFDLS (399 aa). Catalysis depends on Cys1855, which acts as the Glycyl thioester intermediate.

Belongs to the UPL family. K-HECT subfamily. As to expression, widely expressed.

It catalyses the reaction S-ubiquitinyl-[E2 ubiquitin-conjugating enzyme]-L-cysteine + [acceptor protein]-L-lysine = [E2 ubiquitin-conjugating enzyme]-L-cysteine + N(6)-ubiquitinyl-[acceptor protein]-L-lysine.. It participates in protein modification; protein ubiquitination. In terms of biological role, probable E3 ubiquitin-protein ligase which mediates ubiquitination and subsequent proteasomal degradation of target proteins. Involved in the repression of endoreduplication process and the cell morphogenesis in the trichomes. In Arabidopsis thaliana (Mouse-ear cress), this protein is E3 ubiquitin-protein ligase UPL3 (UPL3).